The chain runs to 378 residues: Glutamate 5-kinase 1 (378 aa).

Lysine 13 is a binding site for ATP. Positions 53, 140, and 152 each coordinate substrate. Residue 172 to 173 (SD) participates in ATP binding. The 78-residue stretch at 278-355 (AGRLTVDAGA…AEIETVLGYE (78 aa)) folds into the PUA domain.

This sequence belongs to the glutamate 5-kinase family.

Its subcellular location is the cytoplasm. It carries out the reaction L-glutamate + ATP = L-glutamyl 5-phosphate + ADP. It functions in the pathway amino-acid biosynthesis; L-proline biosynthesis; L-glutamate 5-semialdehyde from L-glutamate: step 1/2. Functionally, catalyzes the transfer of a phosphate group to glutamate to form L-glutamate 5-phosphate. The chain is Glutamate 5-kinase 1 from Mesorhizobium japonicum (strain LMG 29417 / CECT 9101 / MAFF 303099) (Mesorhizobium loti (strain MAFF 303099)).